The following is a 767-amino-acid chain: Protein ROLLING AND ERECT LEAF 2 (767 aa).

3 disordered regions span residues 1 to 20 (MGCTASKVEQEDTVRRCKER), 78 to 187 (PALA…SEFF), and 201 to 309 (RELE…SSTV). Pro residues-rich tracts occupy residues 81–90 (APTPTPPPPS) and 110–126 (APPPPPPTQSHQPPPPV). Over residues 145–155 (SDSSVASPARS) the composition is skewed to low complexity. Over residues 201–210 (RELEEEEKAR) the composition is skewed to basic and acidic residues. The span at 221 to 232 (EDEVDDDDDERE) shows a compositional bias: acidic residues. The segment covering 255–264 (TRSEEGEMGN) has biased composition (basic and acidic residues).

Highly expressed in young leaves and panicles. Expressed at low levels in roots.

The protein localises to the cell membrane. In terms of biological role, involved in the regulation of leaf shape formation. May function by coordinating the expression of genes associated with leaf and bulliform cell development. In Oryza sativa subsp. japonica (Rice), this protein is Protein ROLLING AND ERECT LEAF 2.